Reading from the N-terminus, the 195-residue chain is Holliday junction branch migration complex subunit RuvA (195 aa).

Residues 1–64 (MIKGVEGEIT…DRAPEIYGFK (64 aa)) are domain I. The tract at residues 65–137 (DRAEYNVFLM…LYDLVKDYAV (73 aa)) is domain II. Residues 137 to 141 (VEFPK) form a flexible linker region. Positions 142–195 (ELSDVSEDAVGALTALGFDMTSAKLAVNEVLKEQTVENTQELVRKALRKLNKTR) are domain III.

This sequence belongs to the RuvA family. Homotetramer. Forms an RuvA(8)-RuvB(12)-Holliday junction (HJ) complex. HJ DNA is sandwiched between 2 RuvA tetramers; dsDNA enters through RuvA and exits via RuvB. An RuvB hexamer assembles on each DNA strand where it exits the tetramer. Each RuvB hexamer is contacted by two RuvA subunits (via domain III) on 2 adjacent RuvB subunits; this complex drives branch migration. In the full resolvosome a probable DNA-RuvA(4)-RuvB(12)-RuvC(2) complex forms which resolves the HJ.

It localises to the cytoplasm. Its function is as follows. The RuvA-RuvB-RuvC complex processes Holliday junction (HJ) DNA during genetic recombination and DNA repair, while the RuvA-RuvB complex plays an important role in the rescue of blocked DNA replication forks via replication fork reversal (RFR). RuvA specifically binds to HJ cruciform DNA, conferring on it an open structure. The RuvB hexamer acts as an ATP-dependent pump, pulling dsDNA into and through the RuvAB complex. HJ branch migration allows RuvC to scan DNA until it finds its consensus sequence, where it cleaves and resolves the cruciform DNA. The chain is Holliday junction branch migration complex subunit RuvA from Kosmotoga olearia (strain ATCC BAA-1733 / DSM 21960 / TBF 19.5.1).